We begin with the raw amino-acid sequence, 417 residues long: Fructose-1,6-bisphosphatase 1, chloroplastic (417 aa).

The transit peptide at 1–59 (MAATAATTTSSHLLLSSSRHVASSSQPSILSPRSLFSNNGKRAPTGVRNHQYASGVRCM) directs the protein to the chloroplast. Residues 24–35 (SSQPSILSPRSL) are compositionally biased toward low complexity. The interval 24–48 (SSQPSILSPRSLFSNNGKRAPTGVR) is disordered. Ala60 carries the post-translational modification N-acetylalanine. Mg(2+) contacts are provided by Glu138, Glu167, Asp188, Leu190, and Asp191. Substrate is bound at residue 191 to 194 (DGSS). Cysteines 233 and 238 form a disulfide. Substrate-binding residues include Asn297, Tyr329, Tyr347, Tyr349, and Lys359. Residue Glu365 participates in Mg(2+) binding.

This sequence belongs to the FBPase class 1 family. In terms of assembly, homotetramer. Mg(2+) serves as cofactor.

It localises to the plastid. Its subcellular location is the chloroplast stroma. It carries out the reaction beta-D-fructose 1,6-bisphosphate + H2O = beta-D-fructose 6-phosphate + phosphate. The protein operates within carbohydrate biosynthesis; Calvin cycle. Catalyzes the irreversible reaction from fructose-1,6-bisphosphate to fructose-6-phosphate and inorganic phosphate, to regenerate the primary CO(2) acceptor molecule, ribulose-1,5-bisphosphate. Involved in the regulation of photosynthetic electron flow and sucrose synthesis. Its activity is critical for normal plant development and important for the regulation of a wide range of metabolic processes. This is Fructose-1,6-bisphosphatase 1, chloroplastic from Arabidopsis thaliana (Mouse-ear cress).